Here is a 298-residue protein sequence, read N- to C-terminus: MTKAVNKSNRTNNTNRKTEFWQKLPIHIAILTIAFIWTLPSLGLFISSLRPRGDMLSTGWWTVFWHPLEITQFYLGNYGDVLRSSGMGEAFLNSLTIAVPATVIPIAIATFAAYAFAWMTFPGRQLLFILVVCLLVVPLQTTLIPVLRVYAQLGLAGTFLGVWLAHTAYGLPLGIYLLRNYIGALPKDLIEAAAVDGASHLKIFTKLIVPLSMPAIASFAVFQFLWVWNDLLVALVYLGGTADVAPVTIQLSNLVGSRGQDWYLLTAGAFISMIVPLMVFFGLQRYFVRGILAGSVKS.

Helical transmembrane passes span 26–46 (IHIAILTIAFIWTLPSLGLFI), 97–117 (IAVPATVIPIAIATFAAYAFA), 126–146 (LLFILVVCLLVVPLQTTLIPV), 158–178 (TFLGVWLAHTAYGLPLGIYLL), 207–227 (LIVPLSMPAIASFAVFQFLWV), 231–251 (LLVALVYLGGTADVAPVTIQL), and 263–283 (YLLTAGAFISMIVPLMVFFGL). An ABC transmembrane type-1 domain is found at 91–283 (FLNSLTIAVP…IVPLMVFFGL (193 aa)).

It belongs to the binding-protein-dependent transport system permease family. The complex is composed of two ATP-binding proteins (GgtA), two transmembrane proteins (GgtC and GgtD) and a solute-binding protein (GgtB).

The protein resides in the cell membrane. Its function is as follows. Part of the ABC transporter complex GgtABCD involved in the uptake of the osmoprotective compounds glucosylglycerol (GG), sucrose and trehalose. Responsible for the translocation of the substrate across the membrane. The sequence is that of Osmoprotective compounds uptake permease protein GgtD from Synechocystis sp. (strain ATCC 27184 / PCC 6803 / Kazusa).